The chain runs to 633 residues: MPEISLRHVVSGSSQDSTHCAENLLKADTYRKWRAATAGEKTISVVLQLEKEEQIHSIDIGNDGSAFVEVLVTRSAGGGGATAIEQDYEVLLVTSSFMSPSESRSGSNPNRVRMFGPDKLVRAAAEKRWDRVKIVCSQPYSKDSPYGLSFVRFHSPPDKDEAETPSQKGTVTKLGQFRVKEEDDGASSLKPGALFFSRINKTSSASARGPAGPSYAAATLQASNATSSASSVSKALGSSCKPQESPKGKRKLDLNLEDRRPASKPSAGPPTLKRPKLTVPSRSPAAAAASTPAQKAAPGKPREGTEPRGARAGPQELGKILQGVVVVLSGFQNPFRSELRDKALELGAKYRPDWTPDSTHLICAFANTPKYSQVLGLGGRIVRKEWVLDCYRLRRRLPSRRYLMAGLGSSSEDEEDDSPGESGEDEAPKLSRKRPQAKAKTQAAGPSSPQRPPTPKETKSPSPEPQDNSDTEGEQSEGQDNGAEDSGDTEDELRRVAEQREQRQPPAPGENGEDPYAGSTDENTDNEASTEADLPIPELPDFFQGKHFFLYGEFPGDERRKLIRYVTAFNGELEDYMSERVQFVITAQEWDPIFEEALMENPSLAFVRPRWIYSCNEKQKLLPHQLYGVVPQA.

Residue Ser144 is modified to Phosphoserine. Residues 151–172 (VRFHSPPDKDEAETPSQKGTVT) form a disordered region. Lys180 is covalently cross-linked (Glycyl lysine isopeptide (Lys-Gly) (interchain with G-Cter in SUMO1); alternate). Lys180 is covalently cross-linked (Glycyl lysine isopeptide (Lys-Gly) (interchain with G-Cter in SUMO2); alternate). At Thr202 the chain carries Phosphothreonine. Phosphoserine is present on residues Ser203, Ser230, Ser245, and Ser263. A disordered region spans residues 234–316 (KALGSSCKPQ…PRGARAGPQE (83 aa)). Residues 244 to 261 (ESPKGKRKLDLNLEDRRP) are compositionally biased toward basic and acidic residues. The span at 280–298 (PSRSPAAAAASTPAQKAAP) shows a compositional bias: low complexity. Positions 300–309 (KPREGTEPRG) are enriched in basic and acidic residues. The region spanning 316–404 (ELGKILQGVV…RRLPSRRYLM (89 aa)) is the BRCT 1 domain. 6 positions are modified to phosphoserine: Ser372, Ser409, Ser410, Ser411, Ser447, and Ser448. The segment at 407–538 (LGSSSEDEED…STEADLPIPE (132 aa)) is disordered. Residues 411–425 (SEDEEDDSPGESGED) show a composition bias toward acidic residues. A phosphothreonine mark is found at Thr454 and Thr458. Residues Ser462 and Ser486 each carry the phosphoserine modification. The span at 467 to 491 (DNSDTEGEQSEGQDNGAEDSGDTED) shows a compositional bias: acidic residues. Thr489 bears the Phosphothreonine mark. Residues 492 to 503 (ELRRVAEQREQR) show a composition bias toward basic and acidic residues. Ser519 is modified (phosphoserine). 2 positions are modified to phosphothreonine: Thr520 and Thr524. Residues 538-629 (ELPDFFQGKH…KLLPHQLYGV (92 aa)) enclose the BRCT 2 domain.

In terms of assembly, homodimer. Interacts with polynucleotide kinase (PNK), DNA polymerase-beta (POLB) and DNA ligase III (LIG3). Interacts with APTX and APLF. Interacts with APEX1; the interaction is induced by SIRT1 and increases with the acetylated form of APEX1. Interacts with (poly-ADP-ribosylated) PARP1. Phosphorylation of Ser-372 causes dimer dissociation. Phosphorylation by CK2 promotes interaction with APTX and APLF. Post-translationally, sumoylated.

It is found in the nucleus. Its subcellular location is the chromosome. Scaffold protein involved in DNA single-strand break repair by mediating the assembly of DNA break repair protein complexes. Negatively regulates ADP-ribosyltransferase activity of PARP1 during base-excision repair in order to prevent excessive PARP1 activity. Recognizes and binds poly-ADP-ribose chains: specifically binds auto-poly-ADP-ribosylated PARP1, limiting its activity. This is DNA repair protein XRCC1 (XRCC1) from Cricetulus griseus (Chinese hamster).